A 445-amino-acid polypeptide reads, in one-letter code: Enolase 1 (445 aa).

Positions 164 and 173 each coordinate substrate. Glu216 functions as the Proton donor in the catalytic mechanism. 3 residues coordinate Mg(2+): Asp251, Glu301, and Asp328. Residues Glu301 and Asp328 each coordinate substrate. Lys353 acts as the Proton acceptor in catalysis. Substrate contacts are provided by residues 380–383 (SHRS) and Lys404.

This sequence belongs to the enolase family. Homodimer. It depends on Mg(2+) as a cofactor.

Its subcellular location is the cytoplasm. It catalyses the reaction (2R)-2-phosphoglycerate = phosphoenolpyruvate + H2O. It functions in the pathway carbohydrate degradation; glycolysis; pyruvate from D-glyceraldehyde 3-phosphate: step 4/5. This Hevea brasiliensis (Para rubber tree) protein is Enolase 1 (ENO1).